A 545-amino-acid chain; its full sequence is CTP synthase (545 aa).

The interval 1 to 266 (MITNYIFVTG…DQYICDKFNL (266 aa)) is amidoligase domain. Position 14 (serine 14) interacts with CTP. Residue serine 14 participates in UTP binding. ATP is bound by residues 15 to 20 (SLGKGI) and aspartate 72. Mg(2+)-binding residues include aspartate 72 and glutamate 140. Residues 147 to 149 (DIE), 187 to 192 (KTKPTQ), and lysine 223 contribute to the CTP site. UTP contacts are provided by residues 187-192 (KTKPTQ) and lysine 223. Position 239-241 (239-241 (KDV)) interacts with ATP. One can recognise a Glutamine amidotransferase type-1 domain in the interval 291 to 542 (SIGMVGKYIE…VKSALAHHQD (252 aa)). Residue glycine 352 coordinates L-glutamine. Cysteine 379 (nucleophile; for glutamine hydrolysis) is an active-site residue. Residues 380–383 (LGMQ), glutamate 403, and arginine 470 each bind L-glutamine. Active-site residues include histidine 515 and glutamate 517.

This sequence belongs to the CTP synthase family. Homotetramer.

It catalyses the reaction UTP + L-glutamine + ATP + H2O = CTP + L-glutamate + ADP + phosphate + 2 H(+). The enzyme catalyses L-glutamine + H2O = L-glutamate + NH4(+). The catalysed reaction is UTP + NH4(+) + ATP = CTP + ADP + phosphate + 2 H(+). The protein operates within pyrimidine metabolism; CTP biosynthesis via de novo pathway; CTP from UDP: step 2/2. Allosterically activated by GTP, when glutamine is the substrate; GTP has no effect on the reaction when ammonia is the substrate. The allosteric effector GTP functions by stabilizing the protein conformation that binds the tetrahedral intermediate(s) formed during glutamine hydrolysis. Inhibited by the product CTP, via allosteric rather than competitive inhibition. Catalyzes the ATP-dependent amination of UTP to CTP with either L-glutamine or ammonia as the source of nitrogen. Regulates intracellular CTP levels through interactions with the four ribonucleotide triphosphates. This Hamiltonella defensa subsp. Acyrthosiphon pisum (strain 5AT) protein is CTP synthase.